Consider the following 296-residue polypeptide: Ribosomal RNA small subunit methyltransferase A (296 aa).

The S-adenosyl-L-methionine site is built by Asn-28, Leu-30, Gly-55, Glu-77, Asp-103, and Asn-122.

Belongs to the class I-like SAM-binding methyltransferase superfamily. rRNA adenine N(6)-methyltransferase family. RsmA subfamily.

The protein resides in the cytoplasm. It catalyses the reaction adenosine(1518)/adenosine(1519) in 16S rRNA + 4 S-adenosyl-L-methionine = N(6)-dimethyladenosine(1518)/N(6)-dimethyladenosine(1519) in 16S rRNA + 4 S-adenosyl-L-homocysteine + 4 H(+). Its function is as follows. Specifically dimethylates two adjacent adenosines (A1518 and A1519) in the loop of a conserved hairpin near the 3'-end of 16S rRNA in the 30S particle. May play a critical role in biogenesis of 30S subunits. The protein is Ribosomal RNA small subunit methyltransferase A of Sinorhizobium fredii (strain NBRC 101917 / NGR234).